Consider the following 722-residue polypeptide: D-galactosyl-beta-1-&gt;4-L-rhamnose phosphorylase (722 aa).

D319 acts as the Proton donor in catalysis.

Belongs to the glycoside hydrolase 112 family.

It catalyses the reaction beta-D-galactosyl-(1-&gt;4)-L-rhamnose + phosphate = alpha-D-galactose 1-phosphate + L-rhamnopyranose. Its function is as follows. Reversibly phosphorolyzes beta-D-galactosyl-(1-&gt;4)-L-rhamnose to form alpha-D-galactose 1-phosphate and L-rhamnose. Does not phosphorolyze galacto-N-biose or lacto-N-biose. In the reverse reaction, has the highest activity toward L-rhamnose, also has activity toward L-mannose, and low activity toward L-lyxose, D-glucose, 2-deoxy-D-glucose and D-galactose. This Lachnoclostridium phytofermentans (strain ATCC 700394 / DSM 18823 / ISDg) (Clostridium phytofermentans) protein is D-galactosyl-beta-1-&gt;4-L-rhamnose phosphorylase.